A 190-amino-acid polypeptide reads, in one-letter code: GTP cyclohydrolase 1 (190 aa).

Zn(2+)-binding residues include Cys-80, His-83, and Cys-151.

This sequence belongs to the GTP cyclohydrolase I family. Toroid-shaped homodecamer, composed of two pentamers of five dimers.

It catalyses the reaction GTP + H2O = 7,8-dihydroneopterin 3'-triphosphate + formate + H(+). It participates in cofactor biosynthesis; 7,8-dihydroneopterin triphosphate biosynthesis; 7,8-dihydroneopterin triphosphate from GTP: step 1/1. This Rickettsia akari (strain Hartford) protein is GTP cyclohydrolase 1.